The following is a 955-amino-acid chain: 2-oxoglutarate dehydrogenase E1 component (955 aa).

This sequence belongs to the alpha-ketoglutarate dehydrogenase family. In terms of assembly, homodimer. Part of the 2-oxoglutarate dehydrogenase (OGDH) complex composed of E1 (2-oxoglutarate dehydrogenase), E2 (dihydrolipoamide succinyltransferase) and E3 (dihydrolipoamide dehydrogenase); the complex contains multiple copies of the three enzymatic components (E1, E2 and E3). The cofactor is thiamine diphosphate.

The enzyme catalyses N(6)-[(R)-lipoyl]-L-lysyl-[protein] + 2-oxoglutarate + H(+) = N(6)-[(R)-S(8)-succinyldihydrolipoyl]-L-lysyl-[protein] + CO2. In terms of biological role, E1 component of the 2-oxoglutarate dehydrogenase (OGDH) complex which catalyzes the decarboxylation of 2-oxoglutarate, the first step in the conversion of 2-oxoglutarate to succinyl-CoA and CO(2). The protein is 2-oxoglutarate dehydrogenase E1 component of Bacillus cereus (strain AH187).